The chain runs to 419 residues: N-acylglucosamine 2-epimerase (419 aa).

The segment at 185–206 (LLSLVEQLGEEDEELTNMYAEL) is leucine-zipper. At Ser418 the chain carries Phosphoserine.

It belongs to the N-acylglucosamine 2-epimerase family. Homodimer. Forms a heterodimer with renin and inhibits its activity.

It carries out the reaction an N-acyl-D-glucosamine = an N-acyl-D-mannosamine. Its pathway is amino-sugar metabolism; N-acetylneuraminate degradation. Its function is as follows. Catalyzes the interconversion of N-acetylglucosamine to N-acetylmannosamine. Involved in the N-glycolylneuraminic acid (Neu5Gc) degradation pathway. This chain is N-acylglucosamine 2-epimerase (Renbp), found in Mus musculus (Mouse).